A 2512-amino-acid chain; its full sequence is Probable polyketide synthase 5 (2512 aa).

In terms of domain architecture, Ketosynthase family 3 (KS3) spans 17–447; it reads MKGVAIVGIG…GSNCCLLISE (431 aa). Catalysis depends on for beta-ketoacyl synthase activity residues C187, H329, and H368. The acyl/malonyl transferase stretch occupies residues 638-671; sequence GVNPSFILGHSLGEIPTSYCSGMIDLDTFCYTVY. Residue S648 is the For acyl/malonyl transferase activity of the active site. Residues 928-1050 form an N-terminal hotdog fold region; the sequence is IDHLGLSNSY…ANFQLLDHTI (123 aa). Positions 928-1210 constitute a PKS/mFAS DH domain; sequence IDHLGLSNSY…SKSLIPIKEL (283 aa). H962 functions as the Proton acceptor; for dehydratase activity in the catalytic mechanism. The interval 1067–1210 is C-terminal hotdog fold; it reads TLARLTKNEI…SKSLIPIKEL (144 aa). D1125 (proton donor; for dehydratase activity) is an active-site residue. The Carrier domain occupies 2430–2507; it reads AGSKNVDELF…VSIKIILNFL (78 aa). S2467 bears the O-(pantetheine 4'-phosphoryl)serine mark.

Pantetheine 4'-phosphate is required as a cofactor.

Its function is as follows. Probable polyketide synthase. This chain is Probable polyketide synthase 5 (pks5), found in Dictyostelium discoideum (Social amoeba).